Consider the following 194-residue polypeptide: Recombination protein RecR (194 aa).

The segment at 55–70 (CRECGNLAEGELCPIC) adopts a C4-type zinc-finger fold. The Toprim domain occupies 78-171 (SLLAVVESVA…RVTRPAYGLP (94 aa)).

It belongs to the RecR family.

Functionally, may play a role in DNA repair. It seems to be involved in an RecBC-independent recombinational process of DNA repair. It may act with RecF and RecO. The sequence is that of Recombination protein RecR from Thermus thermophilus (strain ATCC BAA-163 / DSM 7039 / HB27).